The primary structure comprises 142 residues: Translation initiation factor 2 subunit beta (142 aa).

Belongs to the eIF-2-beta/eIF-5 family. Heterotrimer composed of an alpha, a beta and a gamma chain.

Functionally, eIF-2 functions in the early steps of protein synthesis by forming a ternary complex with GTP and initiator tRNA. This Methanosphaera stadtmanae (strain ATCC 43021 / DSM 3091 / JCM 11832 / MCB-3) protein is Translation initiation factor 2 subunit beta.